We begin with the raw amino-acid sequence, 289 residues long: Probable aquaporin PIP-type 7a (289 aa).

The interval 1-39 (MEAKEQDVSLGANKFPERQPLGIAAQSQDEPKDYQEPPP) is disordered. Over 1–57 (MEAKEQDVSLGANKFPERQPLGIAAQSQDEPKDYQEPPPAPLFEPSELTSWSFYRAG) the chain is Cytoplasmic. A helical transmembrane segment spans residues 58 to 78 (IAEFIATFLFLYITVLTVMGV). Over 79–91 (VRESSKCKTVGIQ) the chain is Extracellular. The chain crosses the membrane as a helical span at residues 92-112 (GIAWAFGGMIFALVYCTAGIS). The Cytoplasmic portion of the chain corresponds to 113–135 (GGHINPAVTFGLFLARKLSLTRA). Positions 117–119 (NPA) match the NPA 1 motif. Residues 136 to 156 (IFYMVMQVLGAICGAGVVKGF) form a helical membrane-spanning segment. Over 157 to 178 (EGKQRFGDLNGGANFVAPGYTK) the chain is Extracellular. Residues 179-199 (GDGLGAEIVGTFILVYTVFSA) form a helical membrane-spanning segment. The Cytoplasmic segment spans residues 200–212 (TDAKRSARDSHVP). Residues 213 to 233 (ILAPLPIGFAVFLVHLATIPI) form a helical membrane-spanning segment. Over 234–260 (TGTGINPARSLGAAIVFNKKIGWNDHW) the chain is Extracellular. The NPA 2 signature appears at 239-241 (NPA). Residues 261–281 (IFWVGPFIGAALAALYHQVVI) traverse the membrane as a helical segment. The Cytoplasmic segment spans residues 282-289 (RAIPFKSK).

Belongs to the MIP/aquaporin (TC 1.A.8) family. PIP (TC 1.A.8.11) subfamily.

Its subcellular location is the cell membrane. In terms of biological role, aquaporins facilitate the transport of water and small neutral solutes across cell membranes. The sequence is that of Probable aquaporin PIP-type 7a (TRG-31) from Pisum sativum (Garden pea).